The following is a 107-amino-acid chain: Anaphase-promoting complex subunit 14 (107 aa).

In terms of assembly, the APC/C is composed of at least 13 subunits: apc1, apc2, nuc2, apc4, apc5, cut9, apc8, apc10, apc11, hcn1, apc13, apc14 and apc15.

It is found in the ascus epiplasm. In terms of biological role, component of the anaphase promoting complex/cyclosome (APC/C), a cell cycle-regulated E3 ubiquitin-protein ligase complex that controls progression through mitosis and the G1 phase of the cell cycle. The APC/C is thought to confer substrate specificity and, in the presence of ubiquitin-conjugating E2 enzymes, it catalyzes the formation of protein-ubiquitin conjugates that are subsequently degraded by the 26S proteasome. Appears to play a role in spore wall formation. This Schizosaccharomyces pombe (strain 972 / ATCC 24843) (Fission yeast) protein is Anaphase-promoting complex subunit 14.